A 155-amino-acid polypeptide reads, in one-letter code: Endoribonuclease YbeY (155 aa).

3 residues coordinate Zn(2+): His113, His117, and His123.

It belongs to the endoribonuclease YbeY family. Zn(2+) serves as cofactor.

It is found in the cytoplasm. Single strand-specific metallo-endoribonuclease involved in late-stage 70S ribosome quality control and in maturation of the 3' terminus of the 16S rRNA. This chain is Endoribonuclease YbeY, found in Ureaplasma parvum serovar 3 (strain ATCC 27815 / 27 / NCTC 11736).